The sequence spans 129 residues: Small ribosomal subunit protein uS9 (129 aa).

The protein belongs to the universal ribosomal protein uS9 family.

The protein is Small ribosomal subunit protein uS9 (rpsI) of Treponema pallidum (strain Nichols).